Reading from the N-terminus, the 163-residue chain is Cytochrome b6-f complex subunit 4 (163 aa).

3 helical membrane passes run 36–56, 95–115, and 131–151; these read LLYI…GLAV, LLGV…PFLE, and TVFL…TLPI.

The protein belongs to the cytochrome b family. PetD subfamily. In terms of assembly, the 4 large subunits of the cytochrome b6-f complex are cytochrome b6, subunit IV (17 kDa polypeptide, petD), cytochrome f and the Rieske protein, while the 4 small subunits are petG, petL, petM and petN. The complex functions as a dimer.

The protein resides in the plastid. It localises to the chloroplast thylakoid membrane. Component of the cytochrome b6-f complex, which mediates electron transfer between photosystem II (PSII) and photosystem I (PSI), cyclic electron flow around PSI, and state transitions. This chain is Cytochrome b6-f complex subunit 4, found in Pelargonium hortorum (Common geranium).